The chain runs to 203 residues: Glycerol-3-phosphate acyltransferase (203 aa).

4 helical membrane passes run 7 to 27 (TLLM…VLVC), 82 to 102 (AVSL…PVFF), 118 to 138 (APIG…LLLI), and 141 to 161 (YSSL…WWLD).

It belongs to the PlsY family. As to quaternary structure, probably interacts with PlsX.

The protein localises to the cell inner membrane. The catalysed reaction is an acyl phosphate + sn-glycerol 3-phosphate = a 1-acyl-sn-glycero-3-phosphate + phosphate. Its pathway is lipid metabolism; phospholipid metabolism. Its function is as follows. Catalyzes the transfer of an acyl group from acyl-phosphate (acyl-PO(4)) to glycerol-3-phosphate (G3P) to form lysophosphatidic acid (LPA). This enzyme utilizes acyl-phosphate as fatty acyl donor, but not acyl-CoA or acyl-ACP. The polypeptide is Glycerol-3-phosphate acyltransferase (Shewanella baltica (strain OS223)).